We begin with the raw amino-acid sequence, 180 residues long: Large ribosomal subunit protein uL5 (180 aa).

It belongs to the universal ribosomal protein uL5 family. Part of the 50S ribosomal subunit; part of the 5S rRNA/L5/L18/L25 subcomplex. Contacts the 5S rRNA and the P site tRNA. Forms a bridge to the 30S subunit in the 70S ribosome.

Its function is as follows. This is one of the proteins that bind and probably mediate the attachment of the 5S RNA into the large ribosomal subunit, where it forms part of the central protuberance. In the 70S ribosome it contacts protein S13 of the 30S subunit (bridge B1b), connecting the 2 subunits; this bridge is implicated in subunit movement. Contacts the P site tRNA; the 5S rRNA and some of its associated proteins might help stabilize positioning of ribosome-bound tRNAs. The sequence is that of Large ribosomal subunit protein uL5 from Solibacter usitatus (strain Ellin6076).